The chain runs to 430 residues: Glutamate-1-semialdehyde 2,1-aminomutase (430 aa).

K265 is subject to N6-(pyridoxal phosphate)lysine.

It belongs to the class-III pyridoxal-phosphate-dependent aminotransferase family. HemL subfamily. As to quaternary structure, homodimer. Pyridoxal 5'-phosphate serves as cofactor.

It localises to the cytoplasm. It carries out the reaction (S)-4-amino-5-oxopentanoate = 5-aminolevulinate. Its pathway is porphyrin-containing compound metabolism; protoporphyrin-IX biosynthesis; 5-aminolevulinate from L-glutamyl-tRNA(Glu): step 2/2. In Helicobacter pylori (strain HPAG1), this protein is Glutamate-1-semialdehyde 2,1-aminomutase.